Consider the following 426-residue polypeptide: Spermidine/putrescine import ATP-binding protein PotA (426 aa).

The ABC transporter domain occupies 6–238; the sequence is IEFKNVSKTY…PINHFVADFI (233 aa). 40–47 lines the ATP pocket; sequence GASGSGKS.

This sequence belongs to the ABC transporter superfamily. Spermidine/putrescine importer (TC 3.A.1.11.1) family. The complex is composed of two ATP-binding proteins (PotA), two transmembrane proteins (PotB and PotC) and a solute-binding protein (PotD).

Its subcellular location is the cell membrane. The enzyme catalyses ATP + H2O + polyamine-[polyamine-binding protein]Side 1 = ADP + phosphate + polyamineSide 2 + [polyamine-binding protein]Side 1.. Functionally, part of the ABC transporter complex PotABCD involved in spermidine/putrescine import. Responsible for energy coupling to the transport system. The protein is Spermidine/putrescine import ATP-binding protein PotA of Lactococcus lactis subsp. cremoris (strain SK11).